A 128-amino-acid chain; its full sequence is Aspartate 1-decarboxylase (128 aa).

The active-site Schiff-base intermediate with substrate; via pyruvic acid is Ser25. Residue Ser25 is modified to Pyruvic acid (Ser). Thr57 is a binding site for substrate. Tyr58 serves as the catalytic Proton donor. 73–75 is a substrate binding site; it reads GAA.

The protein belongs to the PanD family. In terms of assembly, heterooctamer of four alpha and four beta subunits. It depends on pyruvate as a cofactor. In terms of processing, is synthesized initially as an inactive proenzyme, which is activated by self-cleavage at a specific serine bond to produce a beta-subunit with a hydroxyl group at its C-terminus and an alpha-subunit with a pyruvoyl group at its N-terminus.

It is found in the cytoplasm. The enzyme catalyses L-aspartate + H(+) = beta-alanine + CO2. The protein operates within cofactor biosynthesis; (R)-pantothenate biosynthesis; beta-alanine from L-aspartate: step 1/1. Functionally, catalyzes the pyruvoyl-dependent decarboxylation of aspartate to produce beta-alanine. This Chlorobium limicola (strain DSM 245 / NBRC 103803 / 6330) protein is Aspartate 1-decarboxylase.